Consider the following 20-residue polypeptide: C-reactive protein (20 aa).

One can recognise a Pentraxin (PTX) domain in the interval 1-20 (SPVAASYRATAGLAGKALDF).

The protein belongs to the pentraxin family. In terms of assembly, homodimer; disulfide-linked. It is not known if it assembles into a pentraxin (or pentaxin) structure. Pentraxins have a discoid arrangement of 5 non-covalently bound subunits. In terms of processing, glycosylated.

It localises to the secreted. Functionally, displays several functions associated with host defense: it promotes agglutination, bacterial capsular swelling, phagocytosis, and complement fixation through its calcium-dependent binding to phosphorylcholine. The sequence is that of C-reactive protein from Mustelus canis (Smooth dogfish).